Reading from the N-terminus, the 151-residue chain is Type 4 adapter protein IcmW (151 aa).

In terms of assembly, the T4BSS is a complex nanomachine composed of several subcomplexes. This subunit is part of the Type IV Coupling Complex (T4CC), a subcomplex composed of the DotLMNYZ core and the IcmSW-LvgA adapter subunits, linked by the C-terminal tail of DotL. Interacts with IcmS. IcmS and IcmW form a stable complex. Interaction with IcmS greatly enhances the stability of IcmW. Interacts directly with the type 4 coupling protein DotL. Interacts with LvgA. Interacts with effector proteins.

It localises to the cytoplasm. Interaction with DotL is critical for the export of IcmSW-dependent substrates. Component of the Dot/Icm type IVB secretion system (T4BSS), which is used to inject bacterial effector proteins into eukaryotic host cells. Part of a subcomplex which recruits effector proteins and delivers them to the core transmembrane subcomplex. The IcmS/IcmW protein complex plays an important role in protein translocation by interacting with multiple Dot/Icm effector proteins to facilitate their translocation into host cells. Interaction promotes conformational changes in the effector protein, which may facilitate display of a C-terminal translocation signal. May maintain the substrates in a translocation competent form. Required for intracellular growth in host cells, replicative phagosome formation and phagosome trafficking. This chain is Type 4 adapter protein IcmW, found in Legionella pneumophila subsp. pneumophila (strain Philadelphia 1 / ATCC 33152 / DSM 7513).